The following is a 112-amino-acid chain: ATP synthase subunit c (112 aa).

Helical transmembrane passes span 36–56 (FSVL…AIGM) and 81–101 (MFIA…IALI).

This sequence belongs to the ATPase C chain family. In terms of assembly, F-type ATPases have 2 components, F(1) - the catalytic core - and F(0) - the membrane proton channel. F(1) has five subunits: alpha(3), beta(3), gamma(1), delta(1), epsilon(1). F(0) has three main subunits: a(1), b(2) and c(10-14). The alpha and beta chains form an alternating ring which encloses part of the gamma chain. F(1) is attached to F(0) by a central stalk formed by the gamma and epsilon chains, while a peripheral stalk is formed by the delta and b chains.

The protein resides in the cell inner membrane. In terms of biological role, f(1)F(0) ATP synthase produces ATP from ADP in the presence of a proton or sodium gradient. F-type ATPases consist of two structural domains, F(1) containing the extramembraneous catalytic core and F(0) containing the membrane proton channel, linked together by a central stalk and a peripheral stalk. During catalysis, ATP synthesis in the catalytic domain of F(1) is coupled via a rotary mechanism of the central stalk subunits to proton translocation. Key component of the F(0) channel; it plays a direct role in translocation across the membrane. A homomeric c-ring of between 10-14 subunits forms the central stalk rotor element with the F(1) delta and epsilon subunits. The polypeptide is ATP synthase subunit c (Campylobacter jejuni (strain RM1221)).